A 159-amino-acid polypeptide reads, in one-letter code: CASP-like protein 5C1 (159 aa).

Over Met-1–Arg-6 the chain is Cytoplasmic. A helical transmembrane segment spans residues Ser-7–Phe-29. Residues Ser-30–Ala-48 lie on the Extracellular side of the membrane. The chain crosses the membrane as a helical span at residues Phe-49–Ile-69. Residues Asp-70–Cys-94 are Cytoplasmic-facing. A helical membrane pass occupies residues Ala-95–Leu-117. The Extracellular segment spans residues His-118–Ala-134. A helical transmembrane segment spans residues Met-135–Val-155. Residues Ala-156 to Trp-159 are Cytoplasmic-facing.

Belongs to the Casparian strip membrane proteins (CASP) family. As to quaternary structure, homodimer and heterodimers.

It is found in the cell membrane. The chain is CASP-like protein 5C1 from Zea mays (Maize).